A 505-amino-acid chain; its full sequence is Trans-cinnamate 4-monooxygenase (505 aa).

A helical transmembrane segment spans residues 3–23; it reads LLLLEKTLLALFLAAITAITI. (E)-cinnamate-binding positions include 213–218 and alanine 306; that span reads RSRLAQ. Position 447 (cysteine 447) interacts with heme.

Belongs to the cytochrome P450 family. Heme is required as a cofactor.

It localises to the membrane. The enzyme catalyses (E)-cinnamate + reduced [NADPH--hemoprotein reductase] + O2 = (E)-4-coumarate + oxidized [NADPH--hemoprotein reductase] + H2O + H(+). It functions in the pathway phenylpropanoid metabolism; trans-4-coumarate biosynthesis; trans-4-coumarate from trans-cinnamate: step 1/1. In terms of biological role, catalyzes the first oxidative step of the phenylpropanoid pathway in higher plants by transforming trans-cinnamate into p-coumarate. The compounds formed by this pathway are essential components for lignification, pollination, and defense against ultraviolet light, predators and pathogens. This chain is Trans-cinnamate 4-monooxygenase (CYP73A9), found in Pisum sativum (Garden pea).